Consider the following 541-residue polypeptide: MALGGLISNRNFGSFIGSGNGCQRLGKSGAEVSKLFPNALLCRNHQPLQASLHHESGHMRRSFGCFLQPRMDSVIRFRNSIKINRSRAYYKSEESDITEGVVPSADGSAEAILVEGNLQNASPWWQQFPRRWVIVLLCFSSFLLCNMDRVNMSIAILPMSQEYNWSSATVGLIQSSFFWGYLLTQILGGIWADKFGGKVVLGFGVVWWSFATIMTPIAARLGLPFLLVVRAFMGIGEGVAMPAMNNMLSKWIPVSERSRSLALVYSGMYLGSVTGLAFSPMLITKFGWPSVFYSFGSLGSIWFLLWLKFAYSSPKDDPDLSEEEKKVILGGSKPREPVTVIPWKLILSKPPVWALIISHFCHNWGTFILLTWMPTYYNQVLKFNLTESGLLCVLPWLTMAVFANIGGWIADTLVSRGLSITNVRKIMQSIGFLGPAFFLSQLSHVKTPAMAVLCMACSQGSDAFSQSGLYSNHQDIGPRYAGVLLGLSNTAGVLAGVFGTAATGYILQRGSWDDVFKVAVALYLIGTLVWNLFATGEKILD.

The N-terminal 28 residues, 1–28, are a transit peptide targeting the chloroplast; that stretch reads MALGGLISNRNFGSFIGSGNGCQRLGKS. Helical transmembrane passes span 133–155, 170–190, 199–219, 221–241, 263–283, 286–306, 352–372, 390–410, 430–450, 481–501, and 515–535; these read VIVL…MSIA, VGLI…LGGI, VVLG…PIAA, LGLP…GVAM, LVYS…PMLI, FGWP…FLLW, VWAL…LLTW, LLCV…GWIA, IGFL…TPAM, AGVL…FGTA, and VFKV…LFAT.

It belongs to the major facilitator superfamily. Sodium/anion cotransporter (TC 2.A.1.14) family. In terms of tissue distribution, expressed in stems, developing siliques, leaf mesophyll cells and sepals of mature flowers. Not detected in roots. Detected in palisade tissue rather than spongy tissue from the leaves.

It is found in the plastid. It localises to the chloroplast inner membrane. With respect to regulation, insensitive to dehydroascorbate, p-isoascorbate, inorganic phosphate, glutamate, ATP, p-aminohippuric acid or tetraethylammonium. Functionally, inorganic phosphate and probable anion transporter. Ascorbate transporter bridging the chloroplast envelope. Transports ascorbate from the cytosol into the chloroplast. Requires chloride ions and the presence of an electrochemical potential across the membrane for activity. This chain is Ascorbate transporter, chloroplastic (PHT4;4), found in Arabidopsis thaliana (Mouse-ear cress).